The following is a 236-amino-acid chain: Ureidoacrylate amidohydrolase RutB (236 aa).

Aspartate 24 acts as the Proton acceptor in catalysis. Lysine 133 is an active-site residue. Cysteine 166 functions as the Nucleophile in the catalytic mechanism.

It belongs to the isochorismatase family. RutB subfamily.

The catalysed reaction is (Z)-3-ureidoacrylate + H2O + H(+) = (Z)-3-aminoacrylate + NH4(+) + CO2. It catalyses the reaction (Z)-3-ureidoacrylate + H2O = (Z)-3-aminoacrylate + carbamate + H(+). It carries out the reaction (Z)-2-methylureidoacrylate + H2O + H(+) = (Z)-2-methylaminoacrylate + NH4(+) + CO2. Hydrolyzes ureidoacrylate to form aminoacrylate and carbamate. The carbamate hydrolyzes spontaneously, thereby releasing one of the nitrogen atoms of the pyrimidine ring as ammonia and one of its carbon atoms as CO2. This chain is Ureidoacrylate amidohydrolase RutB, found in Klebsiella variicola (strain At-22).